The chain runs to 463 residues: Metacaspase-1 (463 aa).

The disordered stretch occupies residues 1 to 149 (MSWNQYPGGG…PQLQGQGGQS (149 aa)). The segment covering 7–18 (PGGGHHQQGGYG) has biased composition (gly residues). Positions 20 to 56 (RPPPPQWAQQGPPPPPNMGYRPPPPPQAYYNNPPPPQ) are enriched in pro residues. Residues 57–83 (QYQRPAPQQNGYQQGGYQQQQQSQGNY) are compositionally biased toward low complexity. Catalysis depends on residues histidine 247 and cysteine 309.

Belongs to the peptidase C14B family.

Functionally, involved in cell death (apoptosis). This Cryptococcus neoformans var. neoformans serotype D (strain B-3501A) (Filobasidiella neoformans) protein is Metacaspase-1 (MCA1).